We begin with the raw amino-acid sequence, 1339 residues long: Tuberous sclerosis 2 protein homolog (1339 aa).

Serine 1036 is subject to Phosphoserine. The Rap-GAP domain maps to 1109-1303; it reads ILANTNPSED…AERLRQLKRL (195 aa).

As to quaternary structure, interacts with tsc1.

The protein resides in the cytoplasm. It is found in the nucleus. Together with tsc1, required for uptake of various amino acids from the environment and for proper conjugation. Involved in induction of gene expression of permeases and genes required for meiosis upon nitrogen starvation. May act as a GTPase-activating protein (GAP) for the small GTPase rhb1. The protein is Tuberous sclerosis 2 protein homolog (tsc2) of Schizosaccharomyces pombe (strain 972 / ATCC 24843) (Fission yeast).